We begin with the raw amino-acid sequence, 853 residues long: DNA mismatch repair protein MutS (853 aa).

614–621 (GPNMGGKS) is a binding site for ATP.

The protein belongs to the DNA mismatch repair MutS family.

Functionally, this protein is involved in the repair of mismatches in DNA. It is possible that it carries out the mismatch recognition step. This protein has a weak ATPase activity. This Escherichia coli (strain SMS-3-5 / SECEC) protein is DNA mismatch repair protein MutS.